Reading from the N-terminus, the 159-residue chain is Phosphopantetheine adenylyltransferase (159 aa).

T10 serves as a coordination point for substrate. Residues 10–11 (TF) and H18 each bind ATP. Residues K42, L73, and R87 each contribute to the substrate site. ATP is bound by residues 88–90 (GLR), E98, and 123–129 (YSYVSGT).

Belongs to the bacterial CoaD family. In terms of assembly, homohexamer. Mg(2+) is required as a cofactor.

It localises to the cytoplasm. It catalyses the reaction (R)-4'-phosphopantetheine + ATP + H(+) = 3'-dephospho-CoA + diphosphate. It participates in cofactor biosynthesis; coenzyme A biosynthesis; CoA from (R)-pantothenate: step 4/5. Its function is as follows. Reversibly transfers an adenylyl group from ATP to 4'-phosphopantetheine, yielding dephospho-CoA (dPCoA) and pyrophosphate. The sequence is that of Phosphopantetheine adenylyltransferase from Coxiella burnetii (strain CbuK_Q154) (Coxiella burnetii (strain Q154)).